Reading from the N-terminus, the 270-residue chain is uncharacterized protein (270 aa).

The N-terminal stretch at 1-22 is a signal peptide; it reads MEYIKKLLCTMSVLLLIIFIGG. Cys23 carries the N-palmitoyl cysteine lipid modification. Residue Cys23 is the site of S-diacylglycerol cysteine attachment.

The protein belongs to the staphylococcal tandem lipoprotein family.

It is found in the cell membrane. This is an uncharacterized protein from Staphylococcus aureus (strain bovine RF122 / ET3-1).